The chain runs to 463 residues: Ribosome biogenesis protein NSA1 (463 aa).

Belongs to the NSA1 family. Component of the pre-66S ribosomal particle. Interacts with NOP7, RRP1 and RRP5.

The protein localises to the nucleus. It is found in the nucleolus. Involved in the biogenesis of the 60S ribosomal subunit. In Saccharomyces cerevisiae (strain ATCC 204508 / S288c) (Baker's yeast), this protein is Ribosome biogenesis protein NSA1 (NSA1).